A 139-amino-acid chain; its full sequence is Arsenate reductase (139 aa).

Active-site nucleophile residues include C10, C82, and C89. Cystine bridges form between C10–C82 and C82–C89.

Belongs to the low molecular weight phosphotyrosine protein phosphatase family. Thioredoxin-coupled ArsC subfamily.

It is found in the cytoplasm. It catalyses the reaction arsenate + [thioredoxin]-dithiol + H(+) = arsenite + [thioredoxin]-disulfide + H2O. Catalyzes the reduction of arsenate [As(V)] to arsenite [As(III)]. In Halalkalibacterium halodurans (strain ATCC BAA-125 / DSM 18197 / FERM 7344 / JCM 9153 / C-125) (Bacillus halodurans), this protein is Arsenate reductase.